The primary structure comprises 735 residues: Polyribonucleotide nucleotidyltransferase (735 aa).

Mg(2+) is bound by residues Asp515 and Asp521. Positions Pro581–Ile641 constitute a KH domain. The interval Asn649–Thr671 is disordered. An S1 motif domain is found at Gly675–Val734.

The protein belongs to the polyribonucleotide nucleotidyltransferase family. Mg(2+) serves as cofactor.

It localises to the cytoplasm. The enzyme catalyses RNA(n+1) + phosphate = RNA(n) + a ribonucleoside 5'-diphosphate. Functionally, involved in mRNA degradation. Catalyzes the phosphorolysis of single-stranded polyribonucleotides processively in the 3'- to 5'-direction. The chain is Polyribonucleotide nucleotidyltransferase from Campylobacter curvus (strain 525.92).